Consider the following 93-residue polypeptide: Putative septation protein SpoVG (93 aa).

Belongs to the SpoVG family.

Could be involved in septation. This is Putative septation protein SpoVG from Alkaliphilus oremlandii (strain OhILAs) (Clostridium oremlandii (strain OhILAs)).